We begin with the raw amino-acid sequence, 448 residues long: Methionine aminopeptidase 2-1 (448 aa).

Positions 1–83 (MAAQVIPELQ…TQKAQTEPPR (83 aa)) are disordered. Over residues 32–48 (ENEDGDSEDDNGDDQGA) the composition is skewed to acidic residues. The segment covering 59-73 (AKKKKKKKPKKKKKD) has biased composition (basic residues). His-198 is a substrate binding site. Residues Asp-218, Asp-229, and His-298 each contribute to the a divalent metal cation site. His-306 contributes to the substrate binding site. A divalent metal cation contacts are provided by Glu-334 and Glu-429.

Belongs to the peptidase M24A family. Methionine aminopeptidase eukaryotic type 2 subfamily. The cofactor is Co(2+). Requires Zn(2+) as cofactor. Mn(2+) is required as a cofactor. Fe(2+) serves as cofactor.

It localises to the cytoplasm. The catalysed reaction is Release of N-terminal amino acids, preferentially methionine, from peptides and arylamides.. Functionally, cotranslationally removes the N-terminal methionine from nascent proteins. The N-terminal methionine is often cleaved when the second residue in the primary sequence is small and uncharged (Met-Ala-, Cys, Gly, Pro, Ser, Thr, or Val). The polypeptide is Methionine aminopeptidase 2-1 (Ajellomyces capsulatus (strain G186AR / H82 / ATCC MYA-2454 / RMSCC 2432) (Darling's disease fungus)).